Reading from the N-terminus, the 145-residue chain is Large ribosomal subunit protein bL35c (145 aa).

The transit peptide at 1–56 directs the protein to the chloroplast; sequence MASLSMASVNVSFCHPLRSSSPKVSLRSSVHFATSLSSSHSISGLRAVLPLKISTV.

This sequence belongs to the bacterial ribosomal protein bL35 family. Part of the 50S ribosomal subunit.

It localises to the plastid. It is found in the chloroplast. This chain is Large ribosomal subunit protein bL35c, found in Arabidopsis thaliana (Mouse-ear cress).